The sequence spans 288 residues: Protoheme IX farnesyltransferase (288 aa).

Transmembrane regions (helical) follow at residues 8–28 (ATKPGIVLSNLMSFIGGFLLA), 35–55 (YLIFLVTLLGVLFIVTAGCVL), 80–100 (ISILTCLIYALICSIIGIYLL), 107–127 (LTMLLAIIGLIVYVGIYTKCM), 132–152 (IYSTIIGSFSGAIPPVIGYCA), 162–182 (LLLLLIFCLWQMPHSYAIAIL), 208–228 (IVIYIVAFIVTTILLNISGYT), 229–249 (TSYQYLIVTNFINFWWLYLAL), and 266–286 (FIFSIIAITSLSLMMSLDSIF).

The protein belongs to the UbiA prenyltransferase family. Protoheme IX farnesyltransferase subfamily.

The protein localises to the cell membrane. The enzyme catalyses heme b + (2E,6E)-farnesyl diphosphate + H2O = Fe(II)-heme o + diphosphate. It functions in the pathway porphyrin-containing compound metabolism; heme O biosynthesis; heme O from protoheme: step 1/1. Converts heme B (protoheme IX) to heme O by substitution of the vinyl group on carbon 2 of heme B porphyrin ring with a hydroxyethyl farnesyl side group. The protein is Protoheme IX farnesyltransferase of Baumannia cicadellinicola subsp. Homalodisca coagulata.